The sequence spans 201 residues: Recombination protein RecR (201 aa).

The C4-type zinc finger occupies 60–75 (CSCCGNVDTIDPCTVC). The region spanning 83–178 (AVIIVVEDVA…RITRLAHGVP (96 aa)) is the Toprim domain.

The protein belongs to the RecR family.

May play a role in DNA repair. It seems to be involved in an RecBC-independent recombinational process of DNA repair. It may act with RecF and RecO. The chain is Recombination protein RecR from Sinorhizobium medicae (strain WSM419) (Ensifer medicae).